The sequence spans 85 residues: Putative membrane protein insertion efficiency factor (85 aa).

The protein belongs to the UPF0161 family.

Its subcellular location is the cell inner membrane. Functionally, could be involved in insertion of integral membrane proteins into the membrane. In Serratia proteamaculans (strain 568), this protein is Putative membrane protein insertion efficiency factor.